Consider the following 176-residue polypeptide: Acireductone dioxygenase (176 aa).

The interval 1 to 21 is disordered; it reads MKAYWYDNKPGDQREPHDSGR. The span at 9–20 shows a compositional bias: basic and acidic residues; the sequence is KPGDQREPHDSG. Fe(2+) is bound by residues histidine 81, histidine 83, glutamate 87, and histidine 126. Positions 81, 83, 87, and 126 each coordinate Ni(2+).

This sequence belongs to the acireductone dioxygenase (ARD) family. Requires Fe(2+) as cofactor. It depends on Ni(2+) as a cofactor.

The protein localises to the cytoplasm. It localises to the nucleus. It carries out the reaction 1,2-dihydroxy-5-(methylsulfanyl)pent-1-en-3-one + O2 = 4-methylsulfanyl-2-oxobutanoate + formate + 2 H(+). The enzyme catalyses 1,2-dihydroxy-5-(methylsulfanyl)pent-1-en-3-one + O2 = 3-(methylsulfanyl)propanoate + CO + formate + 2 H(+). The protein operates within amino-acid biosynthesis; L-methionine biosynthesis via salvage pathway; L-methionine from S-methyl-5-thio-alpha-D-ribose 1-phosphate: step 5/6. In terms of biological role, catalyzes 2 different reactions between oxygen and the acireductone 1,2-dihydroxy-3-keto-5-methylthiopentene (DHK-MTPene) depending upon the metal bound in the active site. Fe-containing acireductone dioxygenase (Fe-ARD) produces formate and 2-keto-4-methylthiobutyrate (KMTB), the alpha-ketoacid precursor of methionine in the methionine recycle pathway. Ni-containing acireductone dioxygenase (Ni-ARD) produces methylthiopropionate, carbon monoxide and formate, and does not lie on the methionine recycle pathway. This is Acireductone dioxygenase (adi1) from Aspergillus fumigatus (strain ATCC MYA-4609 / CBS 101355 / FGSC A1100 / Af293) (Neosartorya fumigata).